Reading from the N-terminus, the 354-residue chain is Guanine nucleotide-binding protein G(t) subunit alpha-2 (354 aa).

The segment at 1-27 is disordered; it reads MGSGASAEDKELAKRSKELEKKLQEDA. Gly2 carries the N-myristoyl glycine lipid modification. Positions 7–27 are enriched in basic and acidic residues; sequence AEDKELAKRSKELEKKLQEDA. Positions 32–354 constitute a G-alpha domain; the sequence is KTVKLLLLGA…KENLKDCGLF (323 aa). A G1 motif region spans residues 35–48; that stretch reads KLLLLGAGESGKST. Residues 40 to 47, 175 to 181, 200 to 204, 269 to 272, and Ala326 each bind GTP; these read GAGESGKS, LRSRVKT, DVGGQ, and NKKD. Ser47 serves as a coordination point for Mg(2+). Positions 173-181 are G2 motif; that stretch reads DVLRSRVKT. The residue at position 178 (Arg178) is an ADP-ribosylarginine; by cholera toxin. Position 181 (Thr181) interacts with Mg(2+). The segment at 196 to 205 is G3 motif; it reads FRMFDVGGQR. Residues 265 to 272 are G4 motif; that stretch reads VLFLNKKD. The segment at 324 to 329 is G5 motif; it reads TCATDT. The residue at position 351 (Cys351) is an ADP-ribosylcysteine; by pertussis toxin.

It belongs to the G-alpha family. G(i/o/t/z) subfamily. In terms of assembly, g proteins are composed of 3 units; alpha, beta and gamma. The alpha chain contains the guanine nucleotide binding site. In terms of tissue distribution, retinal rod outer segment.

It localises to the cell projection. Its subcellular location is the cilium. The protein localises to the photoreceptor outer segment. It is found in the photoreceptor inner segment. In terms of biological role, guanine nucleotide-binding proteins (G proteins) are involved as modulators or transducers in various transmembrane signaling systems. Transducin is an amplifier and one of the transducers of a visual impulse that performs the coupling between rhodopsin and cGMP-phosphodiesterase. This is Guanine nucleotide-binding protein G(t) subunit alpha-2 (GNAT2) from Homo sapiens (Human).